The primary structure comprises 122 residues: Large ribosomal subunit protein bL12 (122 aa).

This sequence belongs to the bacterial ribosomal protein bL12 family. Homodimer. Part of the ribosomal stalk of the 50S ribosomal subunit. Forms a multimeric L10(L12)X complex, where L10 forms an elongated spine to which 2 to 4 L12 dimers bind in a sequential fashion. Binds GTP-bound translation factors.

Functionally, forms part of the ribosomal stalk which helps the ribosome interact with GTP-bound translation factors. Is thus essential for accurate translation. This is Large ribosomal subunit protein bL12 from Clostridium botulinum (strain Langeland / NCTC 10281 / Type F).